Here is a 258-residue protein sequence, read N- to C-terminus: Acyl-[acyl-carrier-protein]--UDP-N-acetylglucosamine O-acyltransferase (258 aa).

This sequence belongs to the transferase hexapeptide repeat family. LpxA subfamily. In terms of assembly, homotrimer.

The protein localises to the cytoplasm. The enzyme catalyses a (3R)-hydroxyacyl-[ACP] + UDP-N-acetyl-alpha-D-glucosamine = a UDP-3-O-[(3R)-3-hydroxyacyl]-N-acetyl-alpha-D-glucosamine + holo-[ACP]. It participates in glycolipid biosynthesis; lipid IV(A) biosynthesis; lipid IV(A) from (3R)-3-hydroxytetradecanoyl-[acyl-carrier-protein] and UDP-N-acetyl-alpha-D-glucosamine: step 1/6. In terms of biological role, involved in the biosynthesis of lipid A, a phosphorylated glycolipid that anchors the lipopolysaccharide to the outer membrane of the cell. The sequence is that of Acyl-[acyl-carrier-protein]--UDP-N-acetylglucosamine O-acyltransferase from Neisseria gonorrhoeae (strain ATCC 700825 / FA 1090).